We begin with the raw amino-acid sequence, 152 residues long: UPF0225 protein YchJ (152 aa).

This sequence belongs to the UPF0225 family.

The sequence is that of UPF0225 protein YchJ from Shigella flexneri serotype 5b (strain 8401).